The sequence spans 539 residues: T-complex protein 1 subunit delta (539 aa).

Residues 1–28 (MPENVASRSGPPAAGPGNRGKGAYQDRD) form a disordered region. Arginine 19 bears the Omega-N-methylarginine mark. Lysine 21 carries the N6-acetyllysine modification. At serine 36 the chain carries Phosphoserine. Residue glycine 53 coordinates ADP. Glycine 53 contacts ATP. Aspartate 104 provides a ligand contact to Mg(2+). Residues glycine 105, threonine 106, threonine 107, serine 108, asparagine 172, serine 173, and lysine 174 each coordinate ADP. 2 residues coordinate ATP: glycine 105 and threonine 106. Lysine 174 serves as a coordination point for ATP. 2 positions are modified to phosphoserine: serine 184 and serine 202. 4 positions are modified to N6-acetyllysine: lysine 288, lysine 302, lysine 319, and lysine 326. Residue glycine 425 participates in ADP binding. At serine 444 the chain carries Phosphoserine. Glutamine 510 lines the ADP pocket.

Belongs to the TCP-1 chaperonin family. As to quaternary structure, component of the chaperonin-containing T-complex (TRiC), a hexadecamer composed of two identical back-to-back stacked rings enclosing a protein folding chamber. Each ring is made up of eight different subunits: TCP1/CCT1, CCT2, CCT3, CCT4, CCT5, CCT6A/CCT6, CCT7, CCT8. Interacts with PACRG. Interacts with DNAAF4. Interacts with DLEC1.

The protein localises to the cytoplasm. The protein resides in the melanosome. Its subcellular location is the cytoskeleton. It localises to the microtubule organizing center. It is found in the centrosome. The protein localises to the cilium basal body. The catalysed reaction is ATP + H2O = ADP + phosphate + H(+). Component of the chaperonin-containing T-complex (TRiC), a molecular chaperone complex that assists the folding of actin, tubulin and other proteins upon ATP hydrolysis. The TRiC complex mediates the folding of WRAP53/TCAB1, thereby regulating telomere maintenance. As part of the TRiC complex may play a role in the assembly of BBSome, a complex involved in ciliogenesis regulating transports vesicles to the cilia. In Rattus norvegicus (Rat), this protein is T-complex protein 1 subunit delta (Cct4).